The following is a 457-amino-acid chain: tRNA-2-methylthio-N(6)-dimethylallyladenosine synthase (457 aa).

The 118-residue stretch at 3–120 (KKVYVKTFGC…LPQMIDARRE (118 aa)) folds into the MTTase N-terminal domain. 6 residues coordinate [4Fe-4S] cluster: cysteine 12, cysteine 49, cysteine 83, cysteine 157, cysteine 161, and cysteine 164. Positions 143–377 (RVEGPSAFVS…QATIEENVAR (235 aa)) constitute a Radical SAM core domain. Residues 380-447 (QSMLGKVERI…PHSLRGELVL (68 aa)) enclose the TRAM domain.

It belongs to the methylthiotransferase family. MiaB subfamily. Monomer. Requires [4Fe-4S] cluster as cofactor.

Its subcellular location is the cytoplasm. It catalyses the reaction N(6)-dimethylallyladenosine(37) in tRNA + (sulfur carrier)-SH + AH2 + 2 S-adenosyl-L-methionine = 2-methylsulfanyl-N(6)-dimethylallyladenosine(37) in tRNA + (sulfur carrier)-H + 5'-deoxyadenosine + L-methionine + A + S-adenosyl-L-homocysteine + 2 H(+). In terms of biological role, catalyzes the methylthiolation of N6-(dimethylallyl)adenosine (i(6)A), leading to the formation of 2-methylthio-N6-(dimethylallyl)adenosine (ms(2)i(6)A) at position 37 in tRNAs that read codons beginning with uridine. The sequence is that of tRNA-2-methylthio-N(6)-dimethylallyladenosine synthase from Burkholderia mallei (strain NCTC 10247).